We begin with the raw amino-acid sequence, 444 residues long: Argininosuccinate synthase (444 aa).

Residues 18-26 (AFSGGLDTS) and Ala-44 contribute to the ATP site. Residue Tyr-100 participates in L-citrulline binding. ATP contacts are provided by Gly-130 and Thr-132. Residues Thr-132, Asn-136, and Asp-137 each coordinate L-aspartate. Residue Asn-136 participates in L-citrulline binding. ATP is bound at residue Asp-137. Residues Arg-140 and Ser-193 each coordinate L-citrulline. Residue Asp-195 coordinates ATP. 3 residues coordinate L-citrulline: Thr-202, Glu-204, and Glu-281.

The protein belongs to the argininosuccinate synthase family. Type 2 subfamily. In terms of assembly, homotetramer.

The protein localises to the cytoplasm. It catalyses the reaction L-citrulline + L-aspartate + ATP = 2-(N(omega)-L-arginino)succinate + AMP + diphosphate + H(+). Its pathway is amino-acid biosynthesis; L-arginine biosynthesis; L-arginine from L-ornithine and carbamoyl phosphate: step 2/3. This chain is Argininosuccinate synthase, found in Mannheimia succiniciproducens (strain KCTC 0769BP / MBEL55E).